The primary structure comprises 172 residues: Small ribosomal subunit protein uS5 (172 aa).

Residues 17–80 (FTEKLIKLNR…ERAKRSMVLF (64 aa)) form the S5 DRBM domain.

It belongs to the universal ribosomal protein uS5 family. Part of the 30S ribosomal subunit. Contacts proteins S4 and S8.

In terms of biological role, with S4 and S12 plays an important role in translational accuracy. Its function is as follows. Located at the back of the 30S subunit body where it stabilizes the conformation of the head with respect to the body. This Treponema pallidum (strain Nichols) protein is Small ribosomal subunit protein uS5.